The following is a 51-amino-acid chain: Large ribosomal subunit protein eL39 (51 aa).

The tract at residues 32 to 51 is disordered; it reads KRRVTRSPTRRHWRRVKLKA.

Belongs to the eukaryotic ribosomal protein eL39 family.

In Pyrobaculum arsenaticum (strain DSM 13514 / JCM 11321 / PZ6), this protein is Large ribosomal subunit protein eL39.